A 306-amino-acid polypeptide reads, in one-letter code: Agmatinase (306 aa).

His-126, Asp-149, His-151, Asp-153, Asp-230, and Asp-232 together coordinate Mn(2+).

This sequence belongs to the arginase family. Agmatinase subfamily. The cofactor is Mn(2+).

The enzyme catalyses agmatine + H2O = urea + putrescine. It participates in amine and polyamine biosynthesis; putrescine biosynthesis via agmatine pathway; putrescine from agmatine: step 1/1. Functionally, catalyzes the formation of putrescine from agmatine. This Escherichia coli O7:K1 (strain IAI39 / ExPEC) protein is Agmatinase.